A 513-amino-acid polypeptide reads, in one-letter code: Fumarate reductase (513 aa).

41-55 (AIVIGGGLAGLSATN) is an FAD binding site. Phosphoserine is present on Ser100. Active-site residues include His288 and Arg311.

This sequence belongs to the FAD-dependent oxidoreductase 2 family. FRD/SDH subfamily. FAD is required as a cofactor.

It is found in the cytoplasm. It localises to the mitochondrion. The protein resides in the nucleus. It catalyses the reaction succinate + NAD(+) = fumarate + NADH + H(+). Irreversibly catalyzes the reduction of fumarate to succinate. This Schizosaccharomyces pombe (strain 972 / ATCC 24843) (Fission yeast) protein is Fumarate reductase (osm1).